The chain runs to 146 residues: Glycosylation-dependent cell adhesion molecule 1 (146 aa).

Residues 1–19 (MKFFTVLLFASLAATSLAA) form the signal peptide. The segment at 25–112 (DELHLRTQPT…SAATSEGKLT (88 aa)) is disordered. The span at 48–60 (ISKESTSSKDLSK) shows a compositional bias: basic and acidic residues. Residues Ser-54, Ser-59, and Ser-71 each carry the phosphoserine modification. A compositionally biased stretch (polar residues) spans 74-106 (NVGTESTKPQSQEAQDGLRSGSSQQEETTSAAT).

It belongs to the PP3/GlyCAM-1 family. Post-translationally, extensively O-glycosylated. Lymph nodes. Associated with the lumenal surface of the high endothelial venules of peripheral lymph nodes.

It localises to the cell membrane. Functionally, adhesion molecule that accomplishes cell binding by presenting carbohydrate(s) to the lectin domain of L-selectin. In Rattus norvegicus (Rat), this protein is Glycosylation-dependent cell adhesion molecule 1 (Glycam1).